Here is a 457-residue protein sequence, read N- to C-terminus: tRNA modification GTPase MnmE (457 aa).

Positions 22, 83, and 122 each coordinate (6S)-5-formyl-5,6,7,8-tetrahydrofolate. Residues 219 to 378 (GLATAIIGRP…LEEAIKTLFF (160 aa)) form the TrmE-type G domain. N229 is a binding site for K(+). Residues 229–234 (NVGKSS), 248–254 (TDIAGTT), and 273–276 (DTAG) each bind GTP. Mg(2+) is bound at residue S233. K(+)-binding residues include T248, I250, and T253. T254 contributes to the Mg(2+) binding site. K457 serves as a coordination point for (6S)-5-formyl-5,6,7,8-tetrahydrofolate.

Belongs to the TRAFAC class TrmE-Era-EngA-EngB-Septin-like GTPase superfamily. TrmE GTPase family. Homodimer. Heterotetramer of two MnmE and two MnmG subunits. K(+) serves as cofactor.

Its subcellular location is the cytoplasm. Functionally, exhibits a very high intrinsic GTPase hydrolysis rate. Involved in the addition of a carboxymethylaminomethyl (cmnm) group at the wobble position (U34) of certain tRNAs, forming tRNA-cmnm(5)s(2)U34. This Listeria welshimeri serovar 6b (strain ATCC 35897 / DSM 20650 / CCUG 15529 / CIP 8149 / NCTC 11857 / SLCC 5334 / V8) protein is tRNA modification GTPase MnmE.